The following is a 139-amino-acid chain: Myosin light chain kinase, smooth muscle (139 aa).

A disordered region spans residues 48–97; the sequence is APTGENAKAPEMKARRPKSSLPPVLGTESDATVKKKPAPKTPPKAAMPPQ.

This sequence belongs to the protein kinase superfamily. CAMK Ser/Thr protein kinase family. In terms of assembly, interacts with SVIL. The C-terminus is deglutamylated by AGTPBP1/CCP1, AGBL1/CCP4 and AGBL4/CCP6, leading to the formation of Myosin light chain kinase, smooth muscle, deglutamylated form. The consequences of C-terminal deglutamylation are unknown.

The enzyme catalyses L-seryl-[myosin light chain] + ATP = O-phospho-L-seryl-[myosin light chain] + ADP + H(+). It catalyses the reaction L-threonyl-[myosin light chain] + ATP = O-phospho-L-threonyl-[myosin light chain] + ADP + H(+). Phosphorylates a specific serine in the N-terminus of a myosin light chain. Also regulates actin-myosin interaction through a non-kinase activity. The protein is Myosin light chain kinase, smooth muscle (MYLK) of Sus scrofa (Pig).